Here is a 350-residue protein sequence, read N- to C-terminus: Cytochrome c biogenesis protein CcsA (350 aa).

8 helical membrane passes run 23-43, 47-67, 82-102, 108-128, 153-173, 258-278, 293-313, and 319-339; these read NVAFAISLGAMLFYWGGAAFP, LLAELGLAGMIGANLTMAALL, LYESLFFLAWGITALHLLALH, WVGVMTAPVVTGIVAFAALVL, VMLLAYAALLVGSLLSISFLI, LIGLGFPLLTIGIIAGAVWAN, WALITWLVFAAYLHARITKGW, and ALLASLGFGVVWVCYLGVNFL.

The protein belongs to the CcmF/CycK/Ccl1/NrfE/CcsA family. As to quaternary structure, may interact with ccs1.

It localises to the cellular thylakoid membrane. In terms of biological role, required during biogenesis of c-type cytochromes (cytochrome c6 and cytochrome f) at the step of heme attachment. This is Cytochrome c biogenesis protein CcsA from Synechococcus sp. (strain JA-2-3B'a(2-13)) (Cyanobacteria bacterium Yellowstone B-Prime).